The chain runs to 366 residues: 4-hydroxy-3-methylbut-2-en-1-yl diphosphate synthase (flavodoxin) (366 aa).

[4Fe-4S] cluster contacts are provided by Cys-270, Cys-273, Cys-305, and Glu-312.

This sequence belongs to the IspG family. It depends on [4Fe-4S] cluster as a cofactor.

The enzyme catalyses (2E)-4-hydroxy-3-methylbut-2-enyl diphosphate + oxidized [flavodoxin] + H2O + 2 H(+) = 2-C-methyl-D-erythritol 2,4-cyclic diphosphate + reduced [flavodoxin]. It functions in the pathway isoprenoid biosynthesis; isopentenyl diphosphate biosynthesis via DXP pathway; isopentenyl diphosphate from 1-deoxy-D-xylulose 5-phosphate: step 5/6. Functionally, converts 2C-methyl-D-erythritol 2,4-cyclodiphosphate (ME-2,4cPP) into 1-hydroxy-2-methyl-2-(E)-butenyl 4-diphosphate. In Wigglesworthia glossinidia brevipalpis, this protein is 4-hydroxy-3-methylbut-2-en-1-yl diphosphate synthase (flavodoxin).